The primary structure comprises 237 residues: MHDRPIIALDFPTQKEVAVFLEKFPKEEALFVKVGMELFYAEGPAIVRWLKEQGHDVFLDLKLHDIPNTVEKAMTNLAKLGVAITNVHAAGGVRMMQAAKEGLIKGTQPGAKVPELIAVTQLTSTSEEEMHHDQLINVPLETSVIHYAKCAEKAGLDGVVCSALEARGIQEATKQTFICLTPGIRPAGSAVGDQQRVVTPQHAREIGSTYIVVGRPITQAENPYEAYQEIKKDWSEK.

Residues Asp10, Lys33, 60 to 69, Thr123, Arg185, Gln194, Gly214, and Arg215 each bind substrate; that span reads DLKLHDIPNT. The Proton donor role is filled by Lys62.

This sequence belongs to the OMP decarboxylase family. Type 1 subfamily. As to quaternary structure, homodimer.

The catalysed reaction is orotidine 5'-phosphate + H(+) = UMP + CO2. It participates in pyrimidine metabolism; UMP biosynthesis via de novo pathway; UMP from orotate: step 2/2. Functionally, catalyzes the decarboxylation of orotidine 5'-monophosphate (OMP) to uridine 5'-monophosphate (UMP). This Enterococcus faecalis (strain ATCC 700802 / V583) protein is Orotidine 5'-phosphate decarboxylase.